The following is a 206-amino-acid chain: Holliday junction branch migration complex subunit RuvA (206 aa).

The domain I stretch occupies residues Met-1–Ile-63. The segment at Asp-64–Ala-142 is domain II. Positions Gly-143–Ile-153 are flexible linker. Positions Ala-154–Lys-206 are domain III.

This sequence belongs to the RuvA family. As to quaternary structure, homotetramer. Forms an RuvA(8)-RuvB(12)-Holliday junction (HJ) complex. HJ DNA is sandwiched between 2 RuvA tetramers; dsDNA enters through RuvA and exits via RuvB. An RuvB hexamer assembles on each DNA strand where it exits the tetramer. Each RuvB hexamer is contacted by two RuvA subunits (via domain III) on 2 adjacent RuvB subunits; this complex drives branch migration. In the full resolvosome a probable DNA-RuvA(4)-RuvB(12)-RuvC(2) complex forms which resolves the HJ.

It localises to the cytoplasm. Its function is as follows. The RuvA-RuvB-RuvC complex processes Holliday junction (HJ) DNA during genetic recombination and DNA repair, while the RuvA-RuvB complex plays an important role in the rescue of blocked DNA replication forks via replication fork reversal (RFR). RuvA specifically binds to HJ cruciform DNA, conferring on it an open structure. The RuvB hexamer acts as an ATP-dependent pump, pulling dsDNA into and through the RuvAB complex. HJ branch migration allows RuvC to scan DNA until it finds its consensus sequence, where it cleaves and resolves the cruciform DNA. This is Holliday junction branch migration complex subunit RuvA from Corynebacterium glutamicum (strain R).